Here is a 247-residue protein sequence, read N- to C-terminus: Exosome complex component Rrp4 (247 aa).

Residues 75 to 148 (DDLVIGIVEN…RDPVITVKGK (74 aa)) form the S1 motif domain. A KH domain is found at 154–220 (TEGVVVDVKP…QAIKLIELKA (67 aa)).

The protein belongs to the RRP4 family. Component of the archaeal exosome complex. Forms a trimer of Rrp4 and/or Csl4 subunits. The trimer associates with a hexameric ring-like arrangement composed of 3 Rrp41-Rrp42 heterodimers.

It is found in the cytoplasm. In terms of biological role, non-catalytic component of the exosome, which is a complex involved in RNA degradation. Increases the RNA binding and the efficiency of RNA degradation. Confers strong poly(A) specificity to the exosome. The protein is Exosome complex component Rrp4 of Thermosphaera aggregans (strain DSM 11486 / M11TL).